Here is a 428-residue protein sequence, read N- to C-terminus: 3-phosphoshikimate 1-carboxyvinyltransferase (428 aa).

Residues K21, S22, and R26 each coordinate 3-phosphoshikimate. A phosphoenolpyruvate-binding site is contributed by K21. Residues G91 and R119 each contribute to the phosphoenolpyruvate site. 3-phosphoshikimate contacts are provided by S164, Q166, D313, and K340. Q166 is a phosphoenolpyruvate binding site. The Proton acceptor role is filled by D313. Phosphoenolpyruvate contacts are provided by R344 and R386.

Belongs to the EPSP synthase family. In terms of assembly, monomer.

The protein resides in the cytoplasm. It carries out the reaction 3-phosphoshikimate + phosphoenolpyruvate = 5-O-(1-carboxyvinyl)-3-phosphoshikimate + phosphate. The protein operates within metabolic intermediate biosynthesis; chorismate biosynthesis; chorismate from D-erythrose 4-phosphate and phosphoenolpyruvate: step 6/7. Catalyzes the transfer of the enolpyruvyl moiety of phosphoenolpyruvate (PEP) to the 5-hydroxyl of shikimate-3-phosphate (S3P) to produce enolpyruvyl shikimate-3-phosphate and inorganic phosphate. The polypeptide is 3-phosphoshikimate 1-carboxyvinyltransferase (Campylobacter jejuni subsp. doylei (strain ATCC BAA-1458 / RM4099 / 269.97)).